Consider the following 87-residue polypeptide: Citrate lyase acyl carrier protein (87 aa).

O-(phosphoribosyl dephospho-coenzyme A)serine is present on serine 14.

This sequence belongs to the CitD family. In terms of assembly, oligomer with a subunit composition of (alpha,beta,gamma)6.

The protein localises to the cytoplasm. In terms of biological role, covalent carrier of the coenzyme of citrate lyase. The protein is Citrate lyase acyl carrier protein of Treponema denticola (strain ATCC 35405 / DSM 14222 / CIP 103919 / JCM 8153 / KCTC 15104).